We begin with the raw amino-acid sequence, 71 residues long: Vitellogenin-B2 (71 aa).

Residues 1 to 15 (MRGIILALLLALAGC) form the signal peptide. The region spanning 24 to 71 (FSESKTYVYNYEGIILNGIPENGLARSGIKLNCKVELSGYAQRSYMLK) is the Vitellogenin domain.

As to expression, produced by the liver, secreted into the blood and then sequestered by receptor mediated endocytosis into growing oocytes, where it is generally cleaved, giving rise to the respective yolk components.

Functionally, precursor of the major egg-yolk proteins that are sources of nutrients during early development of oviparous organisms. This Xenopus laevis (African clawed frog) protein is Vitellogenin-B2.